The primary structure comprises 67 residues: Kappa-conotoxin-like Em11.8 (67 aa).

Residues 1–26 (MMFRLTSVSCFLLVIACLNLFQVVLT) form the signal peptide. Intrachain disulfides connect C29-C43, C36-C48, C42-C51, and C47-C55. Residue F59 is modified to Phenylalanine amide. Positions 63-67 (ATFQE) are excised as a propeptide.

It belongs to the conotoxin I2 superfamily. In terms of tissue distribution, expressed by the venom duct.

The protein resides in the secreted. Inhibits the vertebrate voltage-gated potassium channels Kv1.1/KCNA1 and Kv1.3/KCNA3. The sequence is that of Kappa-conotoxin-like Em11.8 from Conus emaciatus (False virgin cone).